The chain runs to 343 residues: Interferon-inducible protein AIM2 (343 aa).

One can recognise a Pyrin domain in the interval 1-87; it reads MESKYKEILL…AKRLQEEKEK (87 aa). In terms of domain architecture, HIN-200 spans 138–337; the sequence is MVAQQESIRE…SGVHSTIKVI (200 aa).

It belongs to the HIN-200 family. Self-associates; forms homooligomers in response to cytosolic double-stranded DNA (dsDNA) and the dsDNA seems to serve as oligomerization platform. Component of AIM2 inflammasome, which consists of a signal sensor component (AIM2), an adapter (PYCARD/ASC), which recruits an effector pro-inflammatory caspase (CASP1). Interacts (via pyrin domain) with PYCARD/ASC (via pyrin domain); interaction is direct. Component of the AIM2 PANoptosome complex, a multiprotein complex that drives inflammatory cell death (PANoptosis). Interacts with PYDC5; disrupts assembly of the AIM2 inflammasome complex. Interacts with EIF2AK2/PKR. Interacts with MAPRE1. Interacts with IFI16. Interacts with isoform IFI16-beta of IFI16; preventing the interaction between AIM2 and PYCARD/ASC. Interacts with RACK1; promoting association with PP2A phosphatase and dephosphorylation of AKT1. Interacts with TRIM11; promoting AIM2 recruitment to autophagosomes and autophagy-dependent degradation. As to quaternary structure, (Microbial infection) Interacts with human herpesvirus 8 protein SOX/ORF37; this interaction inhibits AIM2 polymerization and subsequent inflammasome activation. In terms of processing, degraded via selective autophagy following interaction with TRIM11. Expressed in spleen, small intestine, peripheral blood leukocytes, and testis.

Its subcellular location is the cytoplasm. It localises to the inflammasome. The protein resides in the nucleus. Inactive in absence of double-stranded DNA (dsDNA). Homooligomerizes upon binding to dsDNA, dsDNA serving as an oligomerization platform. AIM2 requires large dsDNA to generate a structural template that couples dsDNA ligand-binding and homooligomerization. Homooligomerization is followed by recruitment of PYCARD/ASC to initiate speck formation (nucleation). AIM2 and PYCARD/ASC homooligomer filaments assemble bidirectionally and the recognition between AIM2 and PYCARD/ASC oligomers occurs in a head-to-tail manner. Clustered PYCARD/ASC nucleates the formation of CASP1 filaments through the interaction of their respective CARD domains, acting as a platform for CASP1 polymerization and activation. Active CASP1 then specifically processes protein precursors, such as gasdermin-D (GSDMD), IL1B and IL18, leading to the release of mature cytokines in the extracellular milieu or pyroptosis, depending on cell type. AIM2 can be activated in response to events that cause genomic DNA (HIV protease inhibitor nelfinavir) or mitochondrial DNA release in the cytoplasm (such as Perfluoroalkyl substance pollutants or cholesterol overload). Activation of the AIM2 inflammasome is inhibited by isoform IFI16-beta of IFI16, which prevents the interaction between AIM2 and PYCARD/ASC. Activation of the AIM2 inflammasome is inhibited by TRIM11, which promotes autophagy-dependent degradation of AIM2. Functionally, sensor component of the AIM2 inflammasome, which mediates inflammasome activation in response to the presence of double-stranded DNA (dsDNA) in the cytosol, leading to subsequent pyroptosis. Inflammasomes are supramolecular complexes that assemble in the cytosol in response to pathogens and other damage-associated signals and play critical roles in innate immunity and inflammation. Acts as a recognition receptor (PRR): specifically recognizes and binds dsDNA in the cytosol, and mediates the formation of the inflammasome polymeric complex composed of AIM2, CASP1 and PYCARD/ASC. Recruitment of pro-caspase-1 (proCASP1) to the AIM2 inflammasome promotes caspase-1 (CASP1) activation, which subsequently cleaves and activates inflammatory cytokines IL1B and IL18 and gasdermin-D (GSDMD), promoting cytokine secretion. In some cells, CASP1 activation mediates cleavage and activation of GSDMD, triggering pyroptosis without promoting cytokine secretion. Detects cytosolic dsDNA of viral and bacterial origin in a non-sequence-specific manner. Involved in the DNA damage response caused by acute ionizing radiation by mediating pyroptosis of intestinal epithelial cells and bone marrow cells in response to double-strand DNA breaks. Mechanistically, AIM2 senses DNA damage in the nucleus to mediate inflammasome assembly and inflammatory cell death. Also acts as a regulator of neurodevelopment via its role in the DNA damage response: acts by promoting neural cell death in response to DNA damage in the developing brain, thereby purging genetically compromised cells of the central nervous system. Pyroptosis mediated by the AIM2 inflammasome in response to DNA damage is dependent on GSDMD without involving IL1B and IL18 cytokine secretion. Also acts as a mediator of pyroptosis, necroptosis and apoptosis (PANoptosis), an integral part of host defense against pathogens, in response to bacterial infection. Can also trigger PYCARD/ASC-dependent, caspase-1-independent cell death that involves caspase-8 (CASP8). In terms of biological role, also acts as a tumor suppressor independently of its role in inflammatory response. Able to suppress overt cell proliferation in enterocytes: restricts stem cell proliferation in the intestinal mucosa in an inflammasome-independent manner, contributing to a decrease in the likelihood of colorectal cancer development. AIM2 suppresses cell proliferation by inhibiting phosphorylation of AKT1 at 'Ser-473', preventing AKT1 activation and AKT-mTOR signaling pathway. Inhibits AKT1 phosphorylation both by inhibiting the activity of PRKDC/DNA-PK kinase and promoting dephosphorylation by PP2A phosphatase. Also acts as a key regulator of regulatory T-cells (Treg) homeostasis by promoting their stability: acts by preventing AKT1 activation. Its role in Treg homeostasis is important to restain autoimmune diseases. The polypeptide is Interferon-inducible protein AIM2 (Homo sapiens (Human)).